The chain runs to 37 residues: Defensin-A (37 aa).

3 disulfide bridges follow: C4–C25, C10–C33, and C14–C35.

It is found in the secreted. Has antibacterial activity against M.luteus and E.coli. The sequence is that of Defensin-A from Mytilus edulis (Blue mussel).